Here is a 1252-residue protein sequence, read N- to C-terminus: MNVGKTNWTEEQKEAIDTRNCNLLVAAAAGSGKTAVLVERIVKIITNEENPVDIDRLLVVTFTNAAASEMRERIGDAIVNKLCENPNSRVIQKQLALIGKSKITTIHSFCLDVIKNNFHMLDLDPDFRVGDETEIILLKNETLEELFEDKYLQAEYTSKGINKNNNSIEFLKLVESYCGNKNDQVLFNMVMNLYNFSMSNPEPYKWLKKAAERFNVDDDFEFGDSLWAEVLMKNIQIQLLGMKGQLIESINIINSCASIESYRENLEVELSMLEKLIVASNNYEKLYEELKNVQFKTLKRCPKDADKEKQKLVRDLRDGVKKSLSKISEDILSQNSEEIKEEFKVLYPLMKTLSELVIEFDIRYKDKKKKRGIIDFNDFEHMCLSILTKSDESGNIVPSETALKIREKYEEILIDEYQDSNMVQEVILSTISRKDTENPNLFMVGDVKQSIYRFRQANPGIFLEKYNSYKENKDEKNRKVLLYKNFRSRKEVLDSVNFVFKQIMSVNIGELDYDDNEKLNLGANYEEIEENLISHSAELNIIEKSEDNTEIKENNEDEESVDNIMLEARLIGRRIIELKENFKVLDKNTNVYRKAEFKDIVILLRSTKGWANVFSDELKNMGIPVFADANSGYFDAPEVKTMLSLLQVIDNPRQDIPMAAVLKSPVGGFSVEDLIDIKVIEGDTFYDKLKVAADIGDDEFSVRIRTFLNRLYRWRKESLYTPIDEFIWYLYTDTGYYGYVGAVSGGIQRQANLKMLFQRAKIYSETSYKGLFNFINFINKLKLTSGDMGSAKILGENENVVRIMSIHKSKGLEFPIVFVGGLGKNFNLMDMNNPVLFHNYLGFGPEYVDYKKRISHKTLAKEAIKNRIRIETLSEEMRILYVAFTRAKEKLIMVGSVSDIKRSVFKWAVNLRSNQNKISEDYVLKSKSFLDWIASAVIRHKDAENLRDIMDTSKENIDNLVCDPSSWRVNVLSRNDVLSFNQLLLEEEKNINEKLTQFYKRLKEIRSSNYESVYIEEIKSRLEFKYRYEKAAELPSLLSVTELKRNINEDNDEYATKIFTPSLVKKPLFLEEVKKMSPSERGTAVHSVMQHLDFSSISCDMSIKNIRHQIDDMVFRRILTEKQAESVNINRILKFFQSPIGSRVIKAEKVYREFPFQIRVKSTEIYNDLPKIYDDENIIVQGIVDLFFKENDEIVLLDYKNDYINDENLNETVKKYTYQINYYKRALEIVTGLKVKEKYLYLFYTGDTIKIE.

The UvrD-like helicase ATP-binding domain maps to 6–489 (TNWTEEQKEA…VLLYKNFRSR (484 aa)). 27-34 (AAAGSGKT) contacts ATP. The region spanning 523–811 (ANYEEIEENL…RIMSIHKSKG (289 aa)) is the UvrD-like helicase C-terminal domain.

Belongs to the helicase family. AddA subfamily. In terms of assembly, heterodimer of AddA and AddB/RexB. The cofactor is Mg(2+).

It carries out the reaction Couples ATP hydrolysis with the unwinding of duplex DNA by translocating in the 3'-5' direction.. The catalysed reaction is ATP + H2O = ADP + phosphate + H(+). Its function is as follows. The heterodimer acts as both an ATP-dependent DNA helicase and an ATP-dependent, dual-direction single-stranded exonuclease. Recognizes the chi site generating a DNA molecule suitable for the initiation of homologous recombination. The AddA nuclease domain is required for chi fragment generation; this subunit has the helicase and 3' -&gt; 5' nuclease activities. The protein is ATP-dependent helicase/nuclease subunit A of Clostridium acetobutylicum (strain ATCC 824 / DSM 792 / JCM 1419 / IAM 19013 / LMG 5710 / NBRC 13948 / NRRL B-527 / VKM B-1787 / 2291 / W).